We begin with the raw amino-acid sequence, 241 residues long: Small ribosomal subunit protein uS2 (241 aa).

It belongs to the universal ribosomal protein uS2 family.

This Yersinia pestis bv. Antiqua (strain Antiqua) protein is Small ribosomal subunit protein uS2.